Consider the following 254-residue polypeptide: MAIDSKPHDDLQLFKTNLHPCGYWPDRWASDLVMDPNDPRLGAIYPQTLAWGFRRSGNLLYRPHCEHCNACVPVRVNVNAFVPNRSQRRCLARNATLVTRIVPAERNAEQLSLYRRYLHQRHPDGGMDGHGAIEFDQFLIGPWGYGRFMEIREPATNGTPGQLLAVAVTDLTHQALSAVYTFYEPNAAARGLGTLAILHQIHWAQREQRPYLYLGYWIKDHFKMDYKRRFQKLEIYDGYRWRPFSTTYPTTHTL.

It belongs to the R-transferase family. Bpt subfamily.

The protein resides in the cytoplasm. It catalyses the reaction N-terminal L-glutamyl-[protein] + L-leucyl-tRNA(Leu) = N-terminal L-leucyl-L-glutamyl-[protein] + tRNA(Leu) + H(+). It carries out the reaction N-terminal L-aspartyl-[protein] + L-leucyl-tRNA(Leu) = N-terminal L-leucyl-L-aspartyl-[protein] + tRNA(Leu) + H(+). Functionally, functions in the N-end rule pathway of protein degradation where it conjugates Leu from its aminoacyl-tRNA to the N-termini of proteins containing an N-terminal aspartate or glutamate. In Xylella fastidiosa (strain M23), this protein is Aspartate/glutamate leucyltransferase.